The following is an 894-amino-acid chain: Genome polyprotein 2 (894 aa).

Residues threonine 109–glycine 229 enclose the Peptidase C6 domain. Catalysis depends on for helper component proteinase activity residues cysteine 117 and histidine 189. The disordered stretch occupies residues tryptophan 502–glutamine 539.

The protein belongs to the bymoviruses polyprotein 2 family. Post-translationally, the viral RNA2 of bymoviruses is expressed as a single polyprotein which undergoes post-translational proteolytic processing resulting in the production of at least two individual proteins. The HC-pro cleaves its C-terminus autocatalytically (Potential).

It carries out the reaction Hydrolyzes a Gly-|-Gly bond at its own C-terminus, commonly in the sequence -Tyr-Xaa-Val-Gly-|-Gly, in the processing of the potyviral polyprotein.. The chain is Genome polyprotein 2 (RNA2) from Hordeum vulgare (Barley).